A 268-amino-acid chain; its full sequence is MGQKVNSNGLRFGINKNWISRWTASSNQQTATWLVQDEKIRNLFFINYRNAQVSNVEIERTQTTVDVYVYAAQPALLIGSENKNIQKITKMIQIIVGRKIKLDLTINEIGSPMLSSRIIARDIANAIENRVPLRSAMRQALTKVLKAGANGIKVLVSGRLNGAEIARDKMYIEGNMPLSTLRADIDYAFEKAKTTYGIIGVKVWINRGMIYAKGLNRTPAHILHPQKKQLKTPTIKKTNSVIAKQKLTGSDIETASLKALTDNNQNHE.

Residues 40-110 (IRNLFFINYR…KLDLTINEIG (71 aa)) form the KH type-2 domain.

The protein belongs to the universal ribosomal protein uS3 family. As to quaternary structure, part of the 30S ribosomal subunit. Forms a tight complex with proteins S10 and S14.

Binds the lower part of the 30S subunit head. Binds mRNA in the 70S ribosome, positioning it for translation. This is Small ribosomal subunit protein uS3 from Mycoplasma genitalium (strain ATCC 33530 / DSM 19775 / NCTC 10195 / G37) (Mycoplasmoides genitalium).